Here is a 569-residue protein sequence, read N- to C-terminus: Phospholipase B-like protein D (569 aa).

A signal peptide spans 1-22; the sequence is MIIFKNLLKLLIILLTIKLYFC. Residues asparagine 93, asparagine 126, asparagine 181, asparagine 425, and asparagine 430 are each glycosylated (N-linked (GlcNAc...) asparagine).

This sequence belongs to the phospholipase B-like family.

The protein resides in the secreted. Its function is as follows. Probable phospholipase. This chain is Phospholipase B-like protein D (plbD), found in Dictyostelium discoideum (Social amoeba).